The sequence spans 372 residues: Ligninase C (372 aa).

Residues Met-1–Arg-26 form the signal peptide. His-74 serves as the catalytic Proton acceptor. Ca(2+) is bound by residues Asp-75, Gly-93, Asp-95, and Ser-97. Residue Asn-129 is glycosylated (N-linked (GlcNAc...) asparagine). His-205 is a heme b binding site. 5 residues coordinate Ca(2+): Thr-206, Asp-223, Thr-225, Leu-228, and Asp-230. Positions Thr-346–Lys-372 are disordered.

The protein belongs to the peroxidase family. Ligninase subfamily. It depends on Ca(2+) as a cofactor. Requires heme b as cofactor.

It catalyses the reaction 1-(3,4-dimethoxyphenyl)-2-(2-methoxyphenoxy)propane-1,3-diol + H2O2 = 3,4-dimethoxybenzaldehyde + guaiacol + glycolaldehyde + H2O. It carries out the reaction 2 (3,4-dimethoxyphenyl)methanol + H2O2 = 2 (3,4-dimethoxyphenyl)methanol radical + 2 H2O. The protein operates within secondary metabolite metabolism; lignin degradation. Functionally, depolymerization of lignin. Catalyzes the C(alpha)-C(beta) cleavage of the propyl side chains of lignin. The polypeptide is Ligninase C (Trametes versicolor (White-rot fungus)).